The chain runs to 120 residues: U3-hexatoxin-Hi1a (120 aa).

A signal peptide spans 1-19; the sequence is MKLLYFFVVITVLVAVAAA. The propeptide occupies 20-51; sequence LPAKTEEQIAAEENQLVEDLVQYAGTRLTRKR.

It belongs to the neurotoxin 25 family. F7 subfamily. Contains 4 disulfide bonds. In terms of tissue distribution, expressed by the venom gland.

The protein resides in the secreted. Weak insecticidal toxin with probable ion channel impairing activity. In vivo, induces paralysis when injected into sheep blowflies (L.cuprina). Shows weak toxicity, since it is only toxic at high doses, and flies recover within 24 hours. This Hadronyche infensa (Fraser island funnel-web spider) protein is U3-hexatoxin-Hi1a.